The sequence spans 53 residues: RYIPYDQEDVKRQMVAAIGIEDKNTVTRANYYTLDLXIDTVTPDVNRNELKEK.

Belongs to the venom metalloproteinase (M12B) family. P-III subfamily. P-IIIb sub-subfamily. Monomer. Zn(2+) serves as cofactor. In terms of processing, contains numerous disulfide bonds. Post-translationally, glycosylated. Expressed by the venom gland.

The protein localises to the secreted. Alborhagin-induced platelet aggregation, but not shape change, is inhibited by EDTA, suggesting that the platelet activation (shape change) is independent of divalent cation or metalloproteinase activity. In terms of biological role, induces platelet activation and glycoprotein VI (GP6)-dependent platelet aggregation. Induces ectodomain cleavage of GP6 by activating endogenous platelet metalloproteinases (probably ADAM10). Has fibrinogenolytic activity against the alpha chain of fibrinogen (FGA). Recognizes distinct binding sites as convulxin, since alborhagin has minimal effect on convulxin binding to GPVI-expressing cells. Its function is as follows. Disintegrin alborhagin-C: 42 kDa fragment of alborhagin autoproteolysed that does not show platelet activation. The polypeptide is Zinc metalloproteinase-disintegrin-like alborhagin (Trimeresurus albolabris (White-lipped pit viper)).